The following is a 425-amino-acid chain: Arogenate dehydratase 5, chloroplastic (425 aa).

A chloroplast-targeting transit peptide spans 1-38 (MQTISPAFSCDLKSVIQPNLTAKKARYSHVNGKRVSVR). Residues 127–304 (RVAYQGVPGA…NVTRFLMLAR (178 aa)) enclose the Prephenate dehydratase domain. The ACT domain maps to 320-411 (VFAAQEHKGT…SFLRVLGSYP (92 aa)).

Expressed in roots, leaves, stems, flowers and siliques. More abundant in stems and roots.

Its subcellular location is the plastid. The protein localises to the chloroplast stroma. The catalysed reaction is L-arogenate + H(+) = L-phenylalanine + CO2 + H2O. It functions in the pathway amino-acid biosynthesis; L-phenylalanine biosynthesis; L-phenylalanine from L-arogenate: step 1/1. Its function is as follows. Converts the prephenate produced from the shikimate-chorismate pathway into phenylalanine. The polypeptide is Arogenate dehydratase 5, chloroplastic (Arabidopsis thaliana (Mouse-ear cress)).